The following is a 381-amino-acid chain: Protein-glutamate methylesterase/protein-glutamine glutaminase 1 (381 aa).

In terms of domain architecture, Response regulatory spans 14–132 (RVMLVDDSAV…DLAGGVDFKS (119 aa)). Asp65 carries the 4-aspartylphosphate modification. Residues 143-173 (QARRAGARPARPGGPPATRPVIASTSPRTPV) form a disordered region. Positions 144–153 (ARRAGARPAR) are enriched in low complexity. Positions 188 to 381 (PEPPDIIAIG…PWIMKLAARR (194 aa)) constitute a CheB-type methylesterase domain. Catalysis depends on residues Ser199, His227, and Asp323.

It belongs to the CheB family. In terms of processing, phosphorylated by CheA. Phosphorylation of the N-terminal regulatory domain activates the methylesterase activity.

The protein localises to the cytoplasm. The catalysed reaction is [protein]-L-glutamate 5-O-methyl ester + H2O = L-glutamyl-[protein] + methanol + H(+). It catalyses the reaction L-glutaminyl-[protein] + H2O = L-glutamyl-[protein] + NH4(+). Functionally, involved in chemotaxis. Part of a chemotaxis signal transduction system that modulates chemotaxis in response to various stimuli. Catalyzes the demethylation of specific methylglutamate residues introduced into the chemoreceptors (methyl-accepting chemotaxis proteins or MCP) by CheR. Also mediates the irreversible deamidation of specific glutamine residues to glutamic acid. In Paramagnetospirillum magneticum (strain ATCC 700264 / AMB-1) (Magnetospirillum magneticum), this protein is Protein-glutamate methylesterase/protein-glutamine glutaminase 1.